Consider the following 640-residue polypeptide: Influenza virus NS1A-binding protein homolog B (640 aa).

The 69-residue stretch at 32-100 folds into the BTB domain; it reads CDVRLLVCGH…AYTAQLKADK (69 aa). In terms of domain architecture, BACK spans 135 to 186; it reads AISYRNFASSMADGRLLGKIDGYIQDHLHEISEQDDFLKLPRLKLEVMLEDN. A disordered region spans residues 257–278; it reads KKPPRERDEMGSGASGSISPSN. Residues 267–278 show a composition bias toward low complexity; sequence GSGASGSISPSN. 6 Kelch repeats span residues 366 to 412, 413 to 460, 462 to 509, 510 to 556, 557 to 603, and 605 to 640; these read KLIA…VLMG, EVYV…SLQN, LFVV…ELSG, YMYV…VYEG, KLFV…VLNN, and LCAV…LGKN.

The protein localises to the cytoplasm. Its subcellular location is the cytoskeleton. The protein resides in the nucleus. Functionally, plays a role in cell division and in the dynamic organization of the actin skeleton as a stabilizer of actin filaments by association with F-actin through Kelch repeats. This Danio rerio (Zebrafish) protein is Influenza virus NS1A-binding protein homolog B (ivns1abpb).